Consider the following 473-residue polypeptide: H(+)/Cl(-) exchange transporter ClcA (473 aa).

Topologically, residues 1–32 are cytoplasmic; that stretch reads MNTDTPTFEAQQVVRLRRGDLIRRLLQRDKTP. The helical transmembrane segment at 33–69 threads the bilayer; the sequence is LAILLTAAVVGTVTGLIGVAFEKAVTWVQNLRIGALV. The Periplasmic portion of the chain corresponds to 70-76; that stretch reads QTADYAI. Residues 77 to 100 traverse the membrane as a helical segment; the sequence is LVWPLAFILSALLAMVGYFLVRKF. Topologically, residues 101-108 are cytoplasmic; it reads APEAGGSG. The Selectivity filter part_1 motif lies at 106 to 110; the sequence is GSGIP. Chloride is bound at residue S107. Positions 109–116 form an intramembrane region, helical; that stretch reads IPEIEGAL. Residues 117-123 lie on the Cytoplasmic side of the membrane; that stretch reads EELRPVR. Residues 124–141 traverse the membrane as a helical segment; that stretch reads WWRVLPVKFVGGMGTLGA. The Periplasmic segment spans residues 142-147; it reads GMVLGR. The short motif at 146-150 is the Selectivity filter part_2 element; the sequence is GREGP. Residues 148-166 traverse the membrane as a helical segment; sequence EGPTVQIGGNIGRMVLDLF. Over 167-176 the chain is Cytoplasmic; that stretch reads RMRSAEARHT. 2 consecutive intramembrane regions (helical) follow at residues 177 to 189 and 193 to 201; these read LLAT…LSAA and PLAGILFII. Residues 202–214 lie on the Cytoplasmic side of the membrane; it reads EEMRPQFRYNLIS. Residues 215–232 traverse the membrane as a helical segment; sequence IKAVFTGVIMSSIVFRIF. Over 233 to 252 the chain is Periplasmic; it reads NGEAPIIEVGKLSNAPVNTL. The helical transmembrane segment at 253–281 threads the bilayer; that stretch reads WLYLILGMIFGCVGPLFNHLVLRTQDMFQ. Over 282–287 the chain is Cytoplasmic; the sequence is RFHGGE. The helical transmembrane segment at 288-309 threads the bilayer; it reads IKKWVLMGGAIGGLCGILGLIE. At 310–329 the chain is on the periplasmic side; sequence PEAAGGGFNLIPIAAAGNYS. Residues 330–349 traverse the membrane as a helical segment; that stretch reads VGLLLFIFIARVLTTLLCFS. Topologically, residues 350–354 are cytoplasmic; the sequence is SGAPG. Positions 355–359 match the Selectivity filter part_3 motif; sequence GIFAP. The chain crosses the membrane as a helical span at residues 355 to 376; the sequence is GIFAPMLALGTLLGTAFGMAAA. Chloride-binding residues include I356 and F357. At 377-386 the chain is on the periplasmic side; sequence ACFPQYHLEA. An intramembrane region (helical) is located at residues 387–401; the sequence is GTFAIAGMGALLAAS. The segment at residues 402-404 is an intramembrane region (note=Loop between two helices); sequence VRA. Residues 405–416 constitute an intramembrane region (helical); it reads PLTGIVLVLEMT. Residues 417 to 421 constitute an intramembrane region (note=Loop between two helices); that stretch reads DNYQL. A helical membrane pass occupies residues 422–438; it reads ILPMIITCLGATLLAQF. Residues 439–473 lie on the Cytoplasmic side of the membrane; sequence MGGKPLYSTILARTLAKQDAEQAAKSQRSVAGENT. Y445 lines the chloride pocket.

The protein belongs to the chloride channel (TC 2.A.49) family. ClcA subfamily. Homodimer.

It is found in the cell inner membrane. The catalysed reaction is 2 chloride(in) + H(+)(out) = 2 chloride(out) + H(+)(in). Proton-coupled chloride transporter. Functions as antiport system and exchanges two chloride ions for 1 proton. Probably acts as an electrical shunt for an outwardly-directed proton pump that is linked to amino acid decarboxylation, as part of the extreme acid resistance (XAR) response. The protein is H(+)/Cl(-) exchange transporter ClcA of Citrobacter koseri (strain ATCC BAA-895 / CDC 4225-83 / SGSC4696).